Consider the following 366-residue polypeptide: GDSL esterase/lipase LTL1 (366 aa).

The signal sequence occupies residues 1–27 (MNINCSPLGFLISLFFIVTFLAPQVKS). The Nucleophile role is filled by S36. N-linked (GlcNAc...) asparagine glycosylation occurs at N117. Catalysis depends on residues D326 and H329. N-linked (GlcNAc...) asparagine glycosylation is present at N354.

Belongs to the 'GDSL' lipolytic enzyme family. As to quaternary structure, binds to VLG at the endomembrane system. As to expression, mostly expressed in flowers, reproductive stems and rosette leaves, and, to a lower extent, in roots.

The protein localises to the secreted. Functionally, involved in the mechanisms of salt tolerance. Mediates resistance to LiCl and NaCl. This is GDSL esterase/lipase LTL1 from Arabidopsis thaliana (Mouse-ear cress).